Consider the following 537-residue polypeptide: DEAD-box ATP-dependent RNA helicase 5 (537 aa).

Residues 1–97 (MAGQKQELPV…EDLGEGESEQ (97 aa)) are disordered. Residues 22–80 (TNKKKKKSKKNKHTEENHEVEEVPQEVTNGVEEELSNKEKKKKRKREEKESEKNKKKDV) adopt a coiled-coil conformation. Over residues 23-33 (NKKKKKSKKNK) the composition is skewed to basic residues. A compositionally biased stretch (basic and acidic residues) spans 68–87 (EEKESEKNKKKDVPEKKLEA). The Q motif signature appears at 116–142 (KTFAESNLPENVLDCCKTFEKPSPIQS). The Helicase ATP-binding domain maps to 145 to 324 (WPFLLDGRDL…QEFMDPNPIK (180 aa)). 158 to 165 (AKTGSGKT) is an ATP binding site. Positions 272–275 (DEAD) match the DEAD box motif. The 152-residue stretch at 349–500 (ARDQRLIALL…VVPADLLKFG (152 aa)) folds into the Helicase C-terminal domain. Ser-533 is modified (phosphoserine).

The protein belongs to the DEAD box helicase family. DDX5/DBP2 subfamily.

The protein localises to the nucleus. Its subcellular location is the nucleolus. The enzyme catalyses ATP + H2O = ADP + phosphate + H(+). Functionally, ATP-dependent RNA helicase required for 60S ribosomal subunit synthesis. Involved in efficient pre-rRNA processing, predominantly at site A3, which is necessary for the normal formation of 25S and 5.8S rRNAs. In Arabidopsis thaliana (Mouse-ear cress), this protein is DEAD-box ATP-dependent RNA helicase 5 (RH5).